Here is a 349-residue protein sequence, read N- to C-terminus: MAALDQQPLLHDGGDQKPPPEGAARRFRRCRTAPSSEPPPTDKDNSSAADAPPKTLFTGGGRPSFRLVGLLLVAYLLLGTIAFYLAMDHMSGTRTTRALDALYFCVVTMTTVGYGDLVPASDAAKLLACAFVFAGVAVVGTFLSKAADYLVEKQEALLFRALHSHTMVRAMEMNKVRYKLYTAGLLLVAAVASGTVVLWKVEGMRAVDAFYCVCATVTTLGYGDRSFSSEGGRAFAVAWITVSTVVVALFFLYAAELYTERRQRELARWVLRRRTTNMDLEAADLDGDHRVGAADFVLYKLKELGKISQEDISEFLDEFDNLDADHSGTLSPADLAAAQPTPDPPPSLR.

The segment at 1-53 (MAALDQQPLLHDGGDQKPPPEGAARRFRRCRTAPSSEPPPTDKDNSSAADAPP) is disordered. The Cytoplasmic segment spans residues 1–66 (MAALDQQPLL…FTGGGRPSFR (66 aa)). The helical transmembrane segment at 67–87 (LVGLLLVAYLLLGTIAFYLAM) threads the bilayer. The pore-forming intramembrane region spans 100–119 (DALYFCVVTMTTVGYGDLVP). Residues 123–143 (AAKLLACAFVFAGVAVVGTFL) form a helical membrane-spanning segment. Over 144–180 (SKAADYLVEKQEALLFRALHSHTMVRAMEMNKVRYKL) the chain is Cytoplasmic. The chain crosses the membrane as a helical span at residues 181-201 (YTAGLLLVAAVASGTVVLWKV). Positions 208–227 (DAFYCVCATVTTLGYGDRSF) form an intramembrane region, pore-forming. Residues 234–254 (AFAVAWITVSTVVVALFFLYA) form a helical membrane-spanning segment. Residues 255–349 (AELYTERRQR…PTPDPPPSLR (95 aa)) are Cytoplasmic-facing. 2 consecutive EF-hand domains span residues 271–306 (LRRR…ELGK) and 310–345 (EDIS…PDPP). Ca(2+) contacts are provided by D284, D286, D288, R290, D295, D323, D325, S327, T329, and D334. The interval 326 to 349 (HSGTLSPADLAAAQPTPDPPPSLR) is disordered.

It belongs to the two pore domain potassium channel (TC 1.A.1.7) family. In terms of assembly, homodimer.

It localises to the vacuole membrane. Functionally, highly selective inward-rectifying potassium channel that is specifically located in the tonoplast of protein storage vacuoles. Functions independently of the voltage difference across the membrane. The sequence is that of Two pore potassium channel b (TPKB) from Oryza sativa subsp. japonica (Rice).